A 457-amino-acid polypeptide reads, in one-letter code: UDP-glycosyltransferase 708C2 (457 aa).

The active-site Proton acceptor is H32. H32 contacts an anthocyanidin. The Charge relay role is filled by D129. T150 lines the UDP-alpha-D-glucose pocket. A UDP region spans residues 279–280; it reads NR. UDP-alpha-D-glucose is bound by residues V341, Q343, H358, W361, N362, S363, and E366. An anthocyanidin is bound at residue G381. 2 residues coordinate UDP-alpha-D-glucose: D382 and Q383.

This sequence belongs to the UDP-glycosyltransferase family. In terms of tissue distribution, expressed in cotyledons. Not detected in flowers, leaves, roots and hypocotyls.

It carries out the reaction a 3'-hydro-2'-hydroxy-beta-oxodihydrochalcone + UDP-alpha-D-glucose = a 3'-(beta-D-glucopyranosyl)-2'-hydroxy-beta-oxodihydrochalcone + UDP + H(+). In terms of biological role, UDP-glucose-dependent glucosyltransferase catalyzing the c-glucosylation of 2-hydroxyflavanones (2-hydroxynaringenin, 2-hydroxyeriodictyol and 2-hydroxypinocembrin) and phloretin. No activity with flavanones, flavones or flavonols. This is UDP-glycosyltransferase 708C2 from Fagopyrum esculentum (Common buckwheat).